A 486-amino-acid chain; its full sequence is Recombining binding protein suppressor of hairless (486 aa).

DNA-binding regions lie at residues glutamine 43–phenylalanine 53 and serine 151–lysine 156. An N6-acetyllysine modification is found at lysine 161. The tract at residues arginine 178–threonine 183 is DNA-binding. The 91-residue stretch at proline 341–threonine 431 folds into the IPT/TIG domain. Residues serine 451–tyrosine 467 show a composition bias toward polar residues. A disordered region spans residues serine 451 to serine 486. Residues threonine 468–serine 486 are compositionally biased toward low complexity.

Belongs to the Su(H) family. In terms of assembly, interacts with activated NOTCH1, NOTCH2 or NOTCH3. Interacts with MINT/SHARP. This interaction may mediate the recruitment of large corepressor complexes containing proteins such as HDAC1, HDAC2, NCOR2, SAP30, FHL1/KYOT2 and CIR1. Interacts with EP300, MAML1 and PTF1A. Interacts with RITA1, leading to nuclear export, prevent the interaction between RBPJ and NICD product and subsequent down-regulation of the Notch signaling pathway. Interacts with SNW1. Interacts with CHCHD2 and CXXC5. Interacts with BEND6 (via BEN domain). Interacts with NKAPL. Interacts with ZMIZ1. Interacts with RBM15. Interacts with L3MBTL3 and KDM1A; the interaction with KDM1A is weaker in the absence of L3MBTL3 and the interaction with L3MBTL3 is impaired by Notch-derived peptides containing the intracellular domain (NICD).

The protein localises to the nucleus. It localises to the cytoplasm. Its function is as follows. Transcriptional regulator that plays a central role in Notch signaling, a signaling pathway involved in cell-cell communication that regulates a broad spectrum of cell-fate determinations. Acts as a transcriptional repressor when it is not associated with Notch proteins. When associated with some NICD product of Notch proteins (Notch intracellular domain), it acts as a transcriptional activator that activates transcription of Notch target genes. Probably represses or activates transcription via the recruitment of chromatin remodeling complexes containing histone deacetylase or histone acetylase proteins, respectively. Specifically binds to the immunoglobulin kappa-type J segment recombination signal sequence. Binds specifically to methylated DNA. Binds to the oxygen responsive element of COX4I2 and activates its transcription under hypoxia conditions (4% oxygen). Negatively regulates the phagocyte oxidative burst in response to bacterial infection by repressing transcription of NADPH oxidase subunits. This Pongo abelii (Sumatran orangutan) protein is Recombining binding protein suppressor of hairless (RBPJ).